The sequence spans 859 residues: Leucine--tRNA ligase (859 aa).

Positions 42 to 52 (PYPSGRLHMGH) match the 'HIGH' region motif. The 'KMSKS' region signature appears at 618 to 622 (KMSKS). Lys-621 serves as a coordination point for ATP.

Belongs to the class-I aminoacyl-tRNA synthetase family.

The protein resides in the cytoplasm. It catalyses the reaction tRNA(Leu) + L-leucine + ATP = L-leucyl-tRNA(Leu) + AMP + diphosphate. The sequence is that of Leucine--tRNA ligase from Shewanella sp. (strain MR-7).